The chain runs to 497 residues: Cytochrome P450 2D19 (497 aa).

Cysteine 443 lines the heme pocket.

This sequence belongs to the cytochrome P450 family. Requires heme as cofactor.

Its subcellular location is the endoplasmic reticulum membrane. It is found in the microsome membrane. The catalysed reaction is an organic molecule + reduced [NADPH--hemoprotein reductase] + O2 = an alcohol + oxidized [NADPH--hemoprotein reductase] + H2O + H(+). Functionally, responsible for the metabolism of many drugs and environmental chemicals that it oxidizes. This is Cytochrome P450 2D19 (CYP2D19) from Callithrix jacchus (White-tufted-ear marmoset).